A 108-amino-acid chain; its full sequence is Placenta-specific protein 9 (108 aa).

Positions 1 to 19 (MQALLCALAGLALLRAGTG) are cleaved as a signal peptide. Disordered stretches follow at residues 18 to 49 (TGEWGQGPRDTPGRRAAESPSSPGDLAGSPGC) and 89 to 108 (SNLPTGPFSPKPDLLGDDGF). Positions 54–91 (AVQRRLDIMEETVEKTVEHLEAEVTGLLGLLEELASNL) form a coiled coil.

The protein belongs to the PLAC9 family. As to expression, highly expressed in placenta, and weakly in ovary, testis, and lung.

It localises to the secreted. This chain is Placenta-specific protein 9 (Plac9), found in Mus musculus (Mouse).